The sequence spans 392 residues: Sulfate adenylyltransferase (392 aa).

This sequence belongs to the sulfate adenylyltransferase family.

The catalysed reaction is sulfate + ATP + H(+) = adenosine 5'-phosphosulfate + diphosphate. The protein operates within sulfur metabolism; hydrogen sulfide biosynthesis; sulfite from sulfate: step 1/3. The chain is Sulfate adenylyltransferase from Nostoc punctiforme (strain ATCC 29133 / PCC 73102).